The primary structure comprises 167 residues: uncharacterized protein (167 aa).

Positions 140–167 (SSEEKKKKKKKKKEKSLHTEREKKKKKF) are disordered. The segment covering 145 to 154 (KKKKKKKKEK) has biased composition (basic residues).

This is an uncharacterized protein from Saccharomyces cerevisiae (strain ATCC 204508 / S288c) (Baker's yeast).